A 319-amino-acid polypeptide reads, in one-letter code: MAFMSMERSTWAFTFGILGNLISLMVFLSPLPTFYRVYRKKSTEGFQSTPYVVTLFSCMLWMYYAFVKSGAELLVTINGVGCVIETVYLAMYLAYAPKSARMLTAKMLLGLNIGLFGVIALVTLLLSRGELRVHVLGWICVAVSLSVFAAPLSIIRLVIRTKSVEFMPFSLSFFLVLSAVIWFLYGLLKKDVFVALPNVLGFVFGVAQMALYMAYRSKKPLVASSSSAVVAAGLEIKLPEHVKEVQAVAKGAVAAAPEGRISCGAEVHPIDDVMPSEVVEVKVDDEETNRTDEMAGDGDHAMVRTEQIIKPDMAIVVEV.

The Extracellular portion of the chain corresponds to 1-10 (MAFMSMERST). A helical transmembrane segment spans residues 11 to 31 (WAFTFGILGNLISLMVFLSPL). A MtN3/slv 1 domain is found at 13-99 (FTFGILGNLI…AMYLAYAPKS (87 aa)). Over 32-50 (PTFYRVYRKKSTEGFQSTP) the chain is Cytoplasmic. The helical transmembrane segment at 51–71 (YVVTLFSCMLWMYYAFVKSGA) threads the bilayer. Residue E72 is a topological domain, extracellular. A helical membrane pass occupies residues 73–93 (LLVTINGVGCVIETVYLAMYL). The Cytoplasmic segment spans residues 94–106 (AYAPKSARMLTAK). Residues 107–127 (MLLGLNIGLFGVIALVTLLLS) form a helical membrane-spanning segment. Residues 128 to 134 (RGELRVH) are Extracellular-facing. A helical transmembrane segment spans residues 135–155 (VLGWICVAVSLSVFAAPLSII). In terms of domain architecture, MtN3/slv 2 spans 135-219 (VLGWICVAVS…ALYMAYRSKK (85 aa)). The Cytoplasmic segment spans residues 156-167 (RLVIRTKSVEFM). Residues 168–188 (PFSLSFFLVLSAVIWFLYGLL) traverse the membrane as a helical segment. Residues 189–191 (KKD) lie on the Extracellular side of the membrane. A helical transmembrane segment spans residues 192-212 (VFVALPNVLGFVFGVAQMALY). At 213 to 319 (MAYRSKKPLV…KPDMAIVVEV (107 aa)) the chain is on the cytoplasmic side.

The protein belongs to the SWEET sugar transporter family. In terms of assembly, forms homooligomers and/or heterooligomers.

The protein resides in the cell membrane. Functionally, mediates both low-affinity uptake and efflux of sugar across the plasma membrane. In terms of biological role, confers blight susceptibility. Confers TAL effector-mediated susceptibility to Xanthomonas oryzae pv. oryzae. This Oryza sativa subsp. japonica (Rice) protein is Bidirectional sugar transporter SWEET15 (SWEET15).